Consider the following 256-residue polypeptide: Indole-3-glycerol phosphate synthase (256 aa).

It belongs to the TrpC family.

It catalyses the reaction 1-(2-carboxyphenylamino)-1-deoxy-D-ribulose 5-phosphate + H(+) = (1S,2R)-1-C-(indol-3-yl)glycerol 3-phosphate + CO2 + H2O. It participates in amino-acid biosynthesis; L-tryptophan biosynthesis; L-tryptophan from chorismate: step 4/5. The sequence is that of Indole-3-glycerol phosphate synthase from Pelodictyon phaeoclathratiforme (strain DSM 5477 / BU-1).